A 242-amino-acid polypeptide reads, in one-letter code: Mannose-P-dolichol utilization defect 1 protein homolog (242 aa).

In terms of domain architecture, PQ-loop 1 spans 37 to 95 (LSRGLGFAITLGSILLFVPQILKIQAARSAQGISAASQLLALVGAIGTASYSYRSGFVF). Transmembrane regions (helical) follow at residues 40–60 (GLGFAITLGSILLFVPQILKI), 68–88 (GISAASQLLALVGAIGTASYS), 98–118 (WGDSFFVAVQLVIIILQIFLF), 120–140 (GQTMLSVGFLGIVSAVAYGVV), 148–168 (TLTAVQTAGIPIVVVSKLLQI), 180–200 (LSLISVFLQFAGTLARVFTSV), and 207–227 (LLIVSYSTAAVLNGLIFAQFF). Residues 152 to 202 (VQTAGIPIVVVSKLLQISQNYRAQSTGQLSLISVFLQFAGTLARVFTSVQD) form the PQ-loop 2 domain.

Belongs to the MPDU1 (TC 2.A.43.3) family.

Its subcellular location is the membrane. The polypeptide is Mannose-P-dolichol utilization defect 1 protein homolog (Caenorhabditis elegans).